A 421-amino-acid chain; its full sequence is Gamma-glutamyl phosphate reductase (421 aa).

It belongs to the gamma-glutamyl phosphate reductase family.

It localises to the cytoplasm. The catalysed reaction is L-glutamate 5-semialdehyde + phosphate + NADP(+) = L-glutamyl 5-phosphate + NADPH + H(+). Its pathway is amino-acid biosynthesis; L-proline biosynthesis; L-glutamate 5-semialdehyde from L-glutamate: step 2/2. Catalyzes the NADPH-dependent reduction of L-glutamate 5-phosphate into L-glutamate 5-semialdehyde and phosphate. The product spontaneously undergoes cyclization to form 1-pyrroline-5-carboxylate. The chain is Gamma-glutamyl phosphate reductase from Acinetobacter baumannii (strain ACICU).